Consider the following 238-residue polypeptide: MVEKKSPAEGWPVVNGDYIVGDPESPVAATTLASHIEDIPVEAGAAIAGPCKTENLGIEKMIANLISNPNIRFLILCGSEVQGHITGQSIEALHQNGVDPDKRNIIGATGAIPYIENIPDEGIERFQKQLEIVNLIDVEDADAIKAKVKECIEKDPGAFEEEAMIIKVEEGGEEEEGEEVKPVAPETALIEARMRNIQTQVKMIGSTNRMFAGMYSGKVQGIMIGLAFTLTLGILLLV.

Topologically, residues 2-218 (VEKKSPAEGW…RMFAGMYSGK (217 aa)) are cytoplasmic. Position 84 (H84) interacts with 5-hydroxybenzimidazolylcob(I)amide. Residues 219-237 (VQGIMIGLAFTLTLGILLL) form a helical membrane-spanning segment. V238 is a topological domain (extracellular).

The protein belongs to the MtrA family. The complex is composed of 8 subunits; MtrA, MtrB, MtrC, MtrD, MtrE, MtrF, MtrG and MtrH. The cofactor is 5-hydroxybenzimidazolylcob(I)amide.

The protein localises to the cell membrane. The enzyme catalyses 5-methyl-5,6,7,8-tetrahydromethanopterin + coenzyme M + 2 Na(+)(in) = 5,6,7,8-tetrahydromethanopterin + methyl-coenzyme M + 2 Na(+)(out). Its pathway is one-carbon metabolism; methanogenesis from CO(2); methyl-coenzyme M from 5,10-methylene-5,6,7,8-tetrahydromethanopterin: step 2/2. Its function is as follows. Part of a complex that catalyzes the formation of methyl-coenzyme M and tetrahydromethanopterin from coenzyme M and methyl-tetrahydromethanopterin. This is an energy-conserving, sodium-ion translocating step. The chain is Tetrahydromethanopterin S-methyltransferase subunit A 1 from Methanothermobacter marburgensis (strain ATCC BAA-927 / DSM 2133 / JCM 14651 / NBRC 100331 / OCM 82 / Marburg) (Methanobacterium thermoautotrophicum).